A 929-amino-acid chain; its full sequence is Facilitated trehalose transporter Tret1 (929 aa).

Positions 1–275 (MSGRDNRAAG…VGYQQQKATS (275 aa)) are disordered. At 1-462 (MSGRDNRAAG…LEVYRPTTNP (462 aa)) the chain is on the cytoplasmic side. Over residues 10-26 (GAGGGSGGGGGGGGGGG) the composition is skewed to gly residues. Residues 41–59 (KLKEKLTRAGEELGYHRVE) show a composition bias toward basic and acidic residues. The span at 60-72 (SNLSASNTATSLD) shows a compositional bias: polar residues. Composition is skewed to low complexity over residues 85 to 141 (AAPQ…QPLR), 168 to 178 (QEIQQQQLQQQ), and 237 to 254 (SNSN…VAAD). Phosphoserine is present on residues S320, S321, and S322. Residues 352 to 371 (VLHGSSTDSDEEGEDAEHKR) are disordered. 2 positions are modified to phosphoserine: S392 and S394. The segment at 398-420 (FLSSRQNFQQQRSISTDSRKSRR) is disordered. Polar residues predominate over residues 402–413 (RQNFQQQRSIST). The chain crosses the membrane as a helical span at residues 463–483 (IYIWTQVLAALSVSLGSLVVG). The Extracellular segment spans residues 484–512 (FSSAYTSPALVSMTDRNLTSFDVSTEDAS). N500 carries an N-linked (GlcNAc...) asparagine glycan. The helical transmembrane segment at 513–533 (WVGGIMPLAGLAGGIAGGPLI) threads the bilayer. Residues 534-541 (EYLGRRNT) are Cytoplasmic-facing. Residues 542–562 (ILATAVPFIISWLLIACAVNV) traverse the membrane as a helical segment. The Extracellular segment spans residues 563-569 (PMVLSGR). Residues 570–590 (FLAGFCVGIASLSLPVYLGET) traverse the membrane as a helical segment. Residues 591 to 596 (VQPEVR) are Cytoplasmic-facing. Residues 597-617 (GTLGLLPTAFGNIGILLCFIA) traverse the membrane as a helical segment. Residues 618–624 (GTYMDWS) are Extracellular-facing. A helical transmembrane segment spans residues 625–645 (MLAFLGGALPVPFLILMFLIP). The Cytoplasmic portion of the chain corresponds to 646–708 (ETPRWYVSRG…ELLKRSNLKP (63 aa)). A helical transmembrane segment spans residues 709–729 (LSISLGLMFFQQLSGINAVIF). The Extracellular segment spans residues 730–745 (YTVQIFKDAGSTLDGN). A helical membrane pass occupies residues 746–766 (VCTIIVGTVNFIATFIGILLI). The Cytoplasmic portion of the chain corresponds to 767-772 (DRAGRK). Residues 773–793 (ILLYVSNIAMILTLFVLGGFF) traverse the membrane as a helical segment. The Extracellular portion of the chain corresponds to 794–804 (YCKANGMDVSN). The helical transmembrane segment at 805–825 (VGLLPLCCFVVYILGFSLGFG) threads the bilayer. The Cytoplasmic portion of the chain corresponds to 826 to 839 (PIPWLMMGEILPAK). The chain crosses the membrane as a helical span at residues 840-860 (IRGSAASVATAFNWTCTFVVT). At 861 to 873 (KSFLDMIKLIGAH) the chain is on the extracellular side. A helical transmembrane segment spans residues 874–894 (GAFWLFGVICCIGMFFVIFCV). The Cytoplasmic segment spans residues 895–929 (PETQGKTLEDIERKMMGRVRRMSSVANIKPLSFNM). Phosphoserine occurs at positions 917 and 918.

Belongs to the major facilitator superfamily. Sugar transporter (TC 2.A.1.1) family. Trehalose transporter subfamily.

It is found in the cell membrane. Functionally, low-capacity facilitative transporter for trehalose. Does not transport maltose, sucrose or lactose. Mediates the bidirectional transfer of trehalose. Responsible for the transport of trehalose synthesized in the fat body and the incorporation of trehalose into other tissues that require a carbon source, thereby regulating trehalose levels in the hemolymph. The sequence is that of Facilitated trehalose transporter Tret1 from Drosophila grimshawi (Hawaiian fruit fly).